Here is a 976-residue protein sequence, read N- to C-terminus: Terminal uridylyltransferase 1 (976 aa).

2 disordered regions span residues 1–47 (MVSK…DADF) and 129–185 (TGRS…TTEG). The required for oligomerization and may contribute to the incorporation into the MPsome complex stretch occupies residues 1–188 (MVSKYHRLLQ…EDDTTEGPRG (188 aa)). Residues 147–183 (ADDESDGNLDTDGSDASEGDEVESTTDADVYGEDDTT) show a composition bias toward acidic residues. The C2H2-type; atypical zinc-finger motif lies at 190–221 (VRLYSCDACPHAVFTTHAALLAHAEEHHADLL). 4 residues coordinate Zn(2+): Cys-195, Cys-198, His-212, and His-217. UTP contacts are provided by residues Ser-298 and 309–312 (ADID). Mg(2+) contacts are provided by Asp-310 and Asp-312. Position 358 (Arg-358) interacts with RNA. In terms of domain architecture, PAP-associated spans 366–425 (ASSPILTVARRDAEDVVARSIRFILNGPATREDRLLLEGSVRDAVGPTGVQQVWWNRTSD). UTP-binding positions include 480–484 (GIRNS), Lys-505, Lys-509, and 523–524 (SY). The Nucleotide recognition motif (NRM) signature appears at 652 to 661 (IEDPYEENLN). The tract at residues 700-976 (DSSGTPAAGG…SKVTPFKSPR (277 aa)) is important for catalytic activity and RNA binding. The segment at 732-755 (SESRRLPQSNSDNSGRIANGDNES) is disordered.

The protein belongs to the DNA polymerase type-B-like family. In terms of assembly, oligomer. Component of the mitochondrial 3' processome (MPsome) complex composed at least of terminal uridylyltransferase KRET1/TUT1, 3'-5' exonuclease DSS1, MPSS1, MPSS2 and MPSS3. Within the complex, interacts with DSS1, MPSS1 and MPSS3. Mg(2+) is required as a cofactor. The cofactor is Mn(2+).

It localises to the mitochondrion. It carries out the reaction RNA(n) + UTP = RNA(n)-3'-uridine ribonucleotide + diphosphate. In terms of biological role, terminal uridylyltransferase which is involved in the post-transcriptional editing of mitochondrial RNA, a process involving the addition and deletion of uridine (U) nucleotides in the pre-RNA. Specifically, catalyzes the addition of Us to the 3'-hydroxyl group of guided RNA (gRNA), ribosomal RNA (rRNA) and some mRNAs. As part of the mitochondrial 3' processome (MPsome), catalyzes the primary 3' uridylation of gRNA precursors to facilitate their recognition and to induce their processive 3'-5' degradation by DSS1, and the secondary 3' uridylation of mature gRNAs. Involved in the 3' uridylylation of the long A/U tail of some edited and never-edited mRNAs. Promotes 3' uridylylation-mediated decay of some never-edited mRNAs. Does not mediate RNA-independent UTP polymerization. In Trypanosoma brucei brucei, this protein is Terminal uridylyltransferase 1.